A 358-amino-acid polypeptide reads, in one-letter code: Glucose 1-dehydrogenase (358 aa).

Cys-38 contributes to the Zn(2+) binding site. Thr-40 contributes to the substrate binding site. His-65, Glu-66, Cys-92, Cys-95, Cys-98, and Cys-106 together coordinate Zn(2+). Substrate contacts are provided by Glu-113, Glu-149, and Asn-153. Glu-149 contributes to the Zn(2+) binding site. NADP(+)-binding positions include 187-190 (SGPI), 209-211 (NRR), 268-270 (FGT), 296-298 (SVN), and Lys-342. Position 298 (Asn-298) interacts with substrate.

Belongs to the zinc-containing alcohol dehydrogenase family. Glucose 1-dehydrogenase subfamily. Zn(2+) is required as a cofactor.

It catalyses the reaction D-glucose + NAD(+) = D-glucono-1,5-lactone + NADH + H(+). The catalysed reaction is D-glucose + NADP(+) = D-glucono-1,5-lactone + NADPH + H(+). Functionally, catalyzes the NAD(P)(+)-dependent oxidation of D-glucose to D-gluconate via gluconolactone. Can utilize both NAD(+) and NADP(+) as electron acceptor. Is involved in the degradation of glucose through a non-phosphorylative variant of the Entner-Doudoroff pathway. This chain is Glucose 1-dehydrogenase, found in Metallosphaera sedula (strain ATCC 51363 / DSM 5348 / JCM 9185 / NBRC 15509 / TH2).